Here is a 264-residue protein sequence, read N- to C-terminus: ATP synthase subunit a (264 aa).

The next 6 helical transmembrane spans lie at 29–49 (TWHI…LWLF), 89–109 (VIAP…FMDM), 134–154 (DLNI…YYSI), 177–197 (IPVN…SLAL), 208–228 (LIFI…ALGV), and 235–255 (LIFH…LTIV).

The protein belongs to the ATPase A chain family. As to quaternary structure, F-type ATPases have 2 components, CF(1) - the catalytic core - and CF(0) - the membrane proton channel. CF(1) has five subunits: alpha(3), beta(3), gamma(1), delta(1), epsilon(1). CF(0) has three main subunits: a(1), b(2) and c(9-12). The alpha and beta chains form an alternating ring which encloses part of the gamma chain. CF(1) is attached to CF(0) by a central stalk formed by the gamma and epsilon chains, while a peripheral stalk is formed by the delta and b chains.

It is found in the cell inner membrane. Key component of the proton channel; it plays a direct role in the translocation of protons across the membrane. The protein is ATP synthase subunit a of Shewanella sediminis (strain HAW-EB3).